We begin with the raw amino-acid sequence, 125 residues long: Small ribosomal subunit protein uS12 (125 aa).

Asp-89 is subject to 3-methylthioaspartic acid.

This sequence belongs to the universal ribosomal protein uS12 family. In terms of assembly, part of the 30S ribosomal subunit. Contacts proteins S8 and S17. May interact with IF1 in the 30S initiation complex.

Its function is as follows. With S4 and S5 plays an important role in translational accuracy. In terms of biological role, interacts with and stabilizes bases of the 16S rRNA that are involved in tRNA selection in the A site and with the mRNA backbone. Located at the interface of the 30S and 50S subunits, it traverses the body of the 30S subunit contacting proteins on the other side and probably holding the rRNA structure together. The combined cluster of proteins S8, S12 and S17 appears to hold together the shoulder and platform of the 30S subunit. This chain is Small ribosomal subunit protein uS12, found in Clostridium acetobutylicum (strain ATCC 824 / DSM 792 / JCM 1419 / IAM 19013 / LMG 5710 / NBRC 13948 / NRRL B-527 / VKM B-1787 / 2291 / W).